The primary structure comprises 440 residues: Ribosomal protein uS12 methylthiotransferase RimO (440 aa).

Residues 8–124 (TSVFLLSLGC…VLDALGARYH (117 aa)) form the MTTase N-terminal domain. [4Fe-4S] cluster is bound by residues C17, C53, C87, C148, C152, and C155. The Radical SAM core domain maps to 134–363 (LTPPHSSYLK…MELQEEIARK (230 aa)). The TRAM domain occupies 366–437 (EAFVGSLMTV…AYELHGTVES (72 aa)).

Belongs to the methylthiotransferase family. RimO subfamily. [4Fe-4S] cluster serves as cofactor.

The protein localises to the cytoplasm. It carries out the reaction L-aspartate(89)-[ribosomal protein uS12]-hydrogen + (sulfur carrier)-SH + AH2 + 2 S-adenosyl-L-methionine = 3-methylsulfanyl-L-aspartate(89)-[ribosomal protein uS12]-hydrogen + (sulfur carrier)-H + 5'-deoxyadenosine + L-methionine + A + S-adenosyl-L-homocysteine + 2 H(+). Catalyzes the methylthiolation of an aspartic acid residue of ribosomal protein uS12. The sequence is that of Ribosomal protein uS12 methylthiotransferase RimO from Chlorobium luteolum (strain DSM 273 / BCRC 81028 / 2530) (Pelodictyon luteolum).